A 164-amino-acid chain; its full sequence is ATP synthase subunit b (164 aa).

The helical transmembrane segment at 8 to 28 (IGLFFWQTIVFLILLFLMAKF) threads the bilayer.

This sequence belongs to the ATPase B chain family. As to quaternary structure, F-type ATPases have 2 components, F(1) - the catalytic core - and F(0) - the membrane proton channel. F(1) has five subunits: alpha(3), beta(3), gamma(1), delta(1), epsilon(1). F(0) has three main subunits: a(1), b(2) and c(10-14). The alpha and beta chains form an alternating ring which encloses part of the gamma chain. F(1) is attached to F(0) by a central stalk formed by the gamma and epsilon chains, while a peripheral stalk is formed by the delta and b chains.

The protein resides in the cell membrane. Its function is as follows. F(1)F(0) ATP synthase produces ATP from ADP in the presence of a proton or sodium gradient. F-type ATPases consist of two structural domains, F(1) containing the extramembraneous catalytic core and F(0) containing the membrane proton channel, linked together by a central stalk and a peripheral stalk. During catalysis, ATP synthesis in the catalytic domain of F(1) is coupled via a rotary mechanism of the central stalk subunits to proton translocation. In terms of biological role, component of the F(0) channel, it forms part of the peripheral stalk, linking F(1) to F(0). In Christiangramia forsetii (strain DSM 17595 / CGMCC 1.15422 / KT0803) (Gramella forsetii), this protein is ATP synthase subunit b.